The primary structure comprises 384 residues: Sphingosine 1-phosphate receptor 4 (384 aa).

Residues 1 to 50 lie on the Extracellular side of the membrane; the sequence is MNATGTPVAPESCQQLAAGGHSRLIVLHYNHSGRLAGRGGPEDGGLGALR. 2 N-linked (GlcNAc...) asparagine glycosylation sites follow: Asn2 and Asn30. A helical transmembrane segment spans residues 51 to 71; the sequence is GLSVAASCLVVLENLLVLAAI. Topologically, residues 72-84 are cytoplasmic; the sequence is TSHMRSRRWVYYC. A helical transmembrane segment spans residues 85–105; that stretch reads LVNITLSDLLTGAAYLANVLL. Residues 106–117 lie on the Extracellular side of the membrane; it reads SGARTFRLAPAQ. Residues 118 to 138 form a helical membrane-spanning segment; the sequence is WFLREGLLFTALAASTFSLLF. Residues 139-161 are Cytoplasmic-facing; it reads TAGERFATMVRPVAESGATKTSR. A helical transmembrane segment spans residues 162-182; the sequence is VYGFIGLCWLLAALLGMLPLL. Residues 183-206 lie on the Extracellular side of the membrane; the sequence is GWNCLCAFDRCSSLLPLYSKRYIL. Residues 207–227 form a helical membrane-spanning segment; that stretch reads FCLVIFAGVLATIMGLYGAIF. Residues 228-252 are Cytoplasmic-facing; that stretch reads RLVQASGQKAPRPAARRKARRLLKT. A helical membrane pass occupies residues 253 to 273; it reads VLMILLAFLVCWGPLFGLLLA. Residues 274–288 lie on the Extracellular side of the membrane; it reads DVFGSNLWAQEYLRG. A helical transmembrane segment spans residues 289–309; sequence MDWILALAVLNSAVNPIIYSF. Topologically, residues 310–384 are cytoplasmic; it reads RSREVCRAVL…LSSISSVRSI (75 aa). Cys323 carries the S-palmitoyl cysteine lipid modification.

The protein belongs to the G-protein coupled receptor 1 family. As to expression, specifically expressed in fetal and adult lymphoid and hematopoietic tissue as well as in lung. Considerable level of expression in adult and fetal spleen as well as adult peripheral leukocytes and lung. Lower expression in adult thymus, lymph node, bone marrow, and appendix as well as in fetal liver, thymus, and lung.

The protein resides in the cell membrane. Its function is as follows. Receptor for the lysosphingolipid sphingosine 1-phosphate (S1P). S1P is a bioactive lysophospholipid that elicits diverse physiological effect on most types of cells and tissues. May be involved in cell migration processes that are specific for lymphocytes. The protein is Sphingosine 1-phosphate receptor 4 (S1PR4) of Homo sapiens (Human).